The sequence spans 75 residues: Bacteriocin lactococcin-A (75 aa).

Residues 1-21 constitute a propeptide that is removed on maturation; the sequence is MKNQLNFNIVSDEELSEANGG. The helical transmembrane segment at 30 to 52 threads the bilayer; the sequence is AAGDLYYNTNTHKYVYQQTQNAF.

It is found in the secreted. The protein resides in the host cell membrane. Kills Lactococci. The protein is Bacteriocin lactococcin-A (lcnA) of Lactococcus lactis subsp. cremoris (Streptococcus cremoris).